The primary structure comprises 653 residues: Fusexin 1 (653 aa).

Positions 1–24 (MKRVGNCWKASVAAFFLLMFTAFA) are cleaved as a signal peptide. Residues 25 to 559 (AADTTSVDTV…FENIWSGDAN (535 aa)) lie on the Extracellular side of the membrane. Disulfide bonds link Cys129/Cys167, Cys398/Cys441, Cys468/Cys487, and Cys499/Cys516. The interval 155–160 (DYWTGS) is fusion loop. The chain crosses the membrane as a helical span at residues 560 to 580 (ALNWLQVFVTFIAFLGGFALV). Residues 581-604 (GVKLGKIVDGLATEFIPVKDSHVR) are Cytoplasmic-facing. Transmembrane regions (helical) follow at residues 605-625 (LVIGLLGGGMIATAVYQLVTD) and 626-646 (PLGLLVTVLGLVVMGYLYLSA). The Cytoplasmic portion of the chain corresponds to 647-653 (SAPEINL).

This sequence belongs to the HAP2/GCS1 family. Fusexin 1 subfamily. As to quaternary structure, homotrimer stabilized by interdomain contacts and numerous Ca(2+) and Na(+) ions.

It is found in the cell surface. The protein resides in the cell membrane. Functionally, exhibits fusogenic activity. Mediates cell-cell fusion in mammalian cells (bilateral fusion). The protein is Fusexin 1 of Haloplanus natans (strain DSM 17983 / JCM 14081 / CGMCC 1.8972 / RE-101).